A 125-amino-acid chain; its full sequence is Large ribosomal subunit protein bL12 (125 aa).

The protein belongs to the bacterial ribosomal protein bL12 family. Homodimer. Part of the ribosomal stalk of the 50S ribosomal subunit. Forms a multimeric L10(L12)X complex, where L10 forms an elongated spine to which 2 to 4 L12 dimers bind in a sequential fashion. Binds GTP-bound translation factors.

Its function is as follows. Forms part of the ribosomal stalk which helps the ribosome interact with GTP-bound translation factors. Is thus essential for accurate translation. The sequence is that of Large ribosomal subunit protein bL12 from Thermoanaerobacter sp. (strain X514).